The chain runs to 563 residues: Putative cytochrome c oxidase subunit 1-beta (563 aa).

The next 7 helical transmembrane spans lie at 34–54, 76–96, 117–137, 164–184, 208–228, 252–272, and 284–304; these read IGHL…VMAL, LFTL…FAGF, MLSY…LAVP, MWIM…VNFL, LFTS…LLVL, LFWF…FGII, and IFGY…SVVV. H80 serves as a coordination point for Fe(II)-heme a. Cu cation is bound by residues H258 and Y262. The segment at residues 258-262 is a cross-link (1'-histidyl-3'-tyrosine (His-Tyr)); it reads HPEVY. Positions 307 and 308 each coordinate Cu cation. Transmembrane regions (helical) follow at residues 309-329 and 353-373; these read MFAT…LIAV and MLWA…GVIL. Residue H391 participates in heme a3 binding. 3 consecutive transmembrane segments (helical) span residues 392-412, 427-447, and 470-490; these read FHYV…YFWW, IHFW…HWLG, and LSTI…YNVW. H393 lines the Fe(II)-heme a pocket. A disordered region spans residues 536-563; that stretch reads AFDLHHPAHAGEAPQPEPKHEQADREPS. A compositionally biased stretch (basic and acidic residues) spans 552–563; sequence EPKHEQADREPS.

Belongs to the heme-copper respiratory oxidase family. As to quaternary structure, associates with subunits II, III and IV to form cytochrome c oxidase. Requires Cu(2+) as cofactor. Heme serves as cofactor.

The protein resides in the cell membrane. It carries out the reaction 4 Fe(II)-[cytochrome c] + O2 + 8 H(+)(in) = 4 Fe(III)-[cytochrome c] + 2 H2O + 4 H(+)(out). It participates in energy metabolism; oxidative phosphorylation. In terms of biological role, cytochrome c oxidase is the component of the respiratory chain that catalyzes the reduction of oxygen to water. Subunits 1-3 form the functional core of the enzyme complex. CO I is the catalytic subunit of the enzyme. Electrons originating in cytochrome c are transferred via the copper A center of subunit 2 and heme A of subunit 1 to the bimetallic center formed by heme A3 and copper B. This is Putative cytochrome c oxidase subunit 1-beta (ctaD2) from Streptomyces avermitilis (strain ATCC 31267 / DSM 46492 / JCM 5070 / NBRC 14893 / NCIMB 12804 / NRRL 8165 / MA-4680).